Reading from the N-terminus, the 589-residue chain is NADP-dependent malic enzyme (589 aa).

The active-site Proton donor is tyrosine 137. Arginine 190 is a binding site for NAD(+). The active-site Proton acceptor is lysine 208. Positions 280, 281, and 304 each coordinate a divalent metal cation. Aspartate 304 provides a ligand contact to NAD(+). 333–349 (LFLGAGEAGTGIAELIA) contacts NADP(+). Asparagine 445 serves as a coordination point for NAD(+).

The protein belongs to the malic enzymes family. Homotetramer. Requires Mg(2+) as cofactor. The cofactor is Mn(2+).

It is found in the cytoplasm. It catalyses the reaction (S)-malate + NADP(+) = pyruvate + CO2 + NADPH. The catalysed reaction is oxaloacetate + H(+) = pyruvate + CO2. The protein is NADP-dependent malic enzyme (ME1) of Phaseolus vulgaris (Kidney bean).